The following is a 237-amino-acid chain: Mannose-specific lectin alpha chain (237 aa).

E8 and D10 together coordinate Mn(2+). 4 residues coordinate Ca(2+): D10, Y12, N14, and D19. Y12 contributes to the a carbohydrate binding site. Mn(2+) is bound by residues D19, H24, and S34. Position 99–100 (99–100) interacts with a carbohydrate; that stretch reads LY. D208 is a binding site for Ca(2+). R228 is a binding site for a carbohydrate.

The protein belongs to the leguminous lectin family. In terms of assembly, homotetramer. Post-translationally, the beta and gamma chains are produced by partial proteolytic processing of the lectin alpha chain by an asparaginyl endopeptidase.

D-mannose/D-glucose-binding lectin. Also binds derivatives of glucose and mannose such as more complex glycans. This is Mannose-specific lectin alpha chain from Cymbosema roseum (Dioclea purpurea).